The chain runs to 196 residues: dITP/XTP pyrophosphatase (196 aa).

8–13 (TKNEGK) serves as a coordination point for substrate. Residues Glu-41 and Asp-70 each coordinate Mg(2+). Residue Asp-70 is the Proton acceptor of the active site. Substrate-binding positions include Ser-71, 153 to 156 (FGYD), Lys-176, and 181 to 182 (HR).

It belongs to the HAM1 NTPase family. Homodimer. It depends on Mg(2+) as a cofactor.

The enzyme catalyses XTP + H2O = XMP + diphosphate + H(+). It catalyses the reaction dITP + H2O = dIMP + diphosphate + H(+). The catalysed reaction is ITP + H2O = IMP + diphosphate + H(+). Functionally, pyrophosphatase that catalyzes the hydrolysis of nucleoside triphosphates to their monophosphate derivatives, with a high preference for the non-canonical purine nucleotides XTP (xanthosine triphosphate), dITP (deoxyinosine triphosphate) and ITP. Seems to function as a house-cleaning enzyme that removes non-canonical purine nucleotides from the nucleotide pool, thus preventing their incorporation into DNA/RNA and avoiding chromosomal lesions. The polypeptide is dITP/XTP pyrophosphatase (Bacillus licheniformis (strain ATCC 14580 / DSM 13 / JCM 2505 / CCUG 7422 / NBRC 12200 / NCIMB 9375 / NCTC 10341 / NRRL NRS-1264 / Gibson 46)).